Consider the following 182-residue polypeptide: uncharacterized protein (182 aa).

Disordered stretches follow at residues 1-49 and 126-171; these read MAAP…DGGS and QGGH…VHAQ. The segment covering 17-39 has biased composition (basic and acidic residues); sequence ELLEKAARLERGPPPRGDPEAVG.

This is an uncharacterized protein from Homo sapiens (Human).